Reading from the N-terminus, the 627-residue chain is Protein fem-1 homolog B (627 aa).

4 ANK repeats span residues 45 to 74, 87 to 116, 120 to 149, and 153 to 182; these read QRST…VQTQ, DGAT…NVNH, TNST…NISI, and YDNT…DPNA. Zn(2+)-binding residues include H185, C186, and H218. ANK repeat units follow at residues 186–215 and 218–248; these read CGAT…AIVV and HGMT…DRRS. The TPR repeat unit spans residues 344–377; sequence SHPIIYRGAVYADNMEFEQCIKLWLHALHLRQKG. ANK repeat units follow at residues 483–527 and 531–568; these read EGFT…EVNA and EGNS…HTDM.

It belongs to the fem-1 family. In terms of assembly, component of a CRL2 E3 ubiquitin-protein ligase complex, also named ECS (Elongin BC-CUL2/5-SOCS-box protein) complex, composed of CUL2, Elongin BC (ELOB and ELOC), RBX1 and substrate-specific adapter FEM1B. Homooligomer. Interacts with PPM1F and PHTF1. Interacts with the death domain of FAS/TNFRSF6 and TNFRSF1A. Interacts with CHEK1. Interacts with NKX3-1. Widely expressed. Highly expressed in testis. Weakly expressed in other tissues.

The protein resides in the cytoplasm. The protein localises to the nucleus. It functions in the pathway protein modification; protein ubiquitination. Activity of the CRL2(FEM1B) complex toward FNIP1 is inhibited by BEX family proteins (BEX1, BEX2, BEX3, BEX4 and/or BEX5) in absence of reductive stress. Mechanistically, BEX proteins act as pseudosubstrate inhibitors that associate with FEM1B via zinc in absence of reductive stress, thereby preventing association between FEM1B and FNIP1. Substrate-recognition component of a Cul2-RING (CRL2) E3 ubiquitin-protein ligase complex of the DesCEND (destruction via C-end degrons) pathway, which recognizes a C-degron located at the extreme C terminus of target proteins, leading to their ubiquitination and degradation. The C-degron recognized by the DesCEND pathway is usually a motif of less than ten residues and can be present in full-length proteins, truncated proteins or proteolytically cleaved forms. The CRL2(FEM1B) complex specifically recognizes proteins ending with -Gly-Leu-Asp-Arg, such as CDK5R1, leading to their ubiquitination and degradation. Also acts as a regulator of the reductive stress response by mediating ubiquitination of reduced FNIP1: in response to reductive stress, the CRL2(FEM1B) complex specifically recognizes a conserved Cys degron in FNIP1 when this degron is reduced, leading to FNIP1 degradation and subsequent activation of mitochondria to recalibrate reactive oxygen species (ROS). Mechanistically, recognizes and binds reduced FNIP1 through two interface zinc ions, which act as a molecular glue that recruit reduced FNIP1 to FEM1B. Promotes ubiquitination of GLI1, suppressing GLI1 transcriptional activator activity. Promotes ubiquitination and degradation of ANKRD37. Promotes ubiquitination and degradation of SLBP. Involved in apoptosis by acting as a death receptor-associated protein that mediates apoptosis. Also involved in glucose homeostasis in pancreatic islet. May also act as an adapter/mediator in replication stress-induced signaling that leads to the activation of CHEK1. In Homo sapiens (Human), this protein is Protein fem-1 homolog B.